Consider the following 337-residue polypeptide: Probable tyrosine--tRNA ligase, cytoplasmic (337 aa).

Tyr35 contacts L-tyrosine. A 'HIGH' region motif is present at residues 40–48; that stretch reads ITGKPHIAY. Residues Tyr162, Gln166, Asp169, and Gln184 each coordinate L-tyrosine. The 'KMSKS' region signature appears at 218–222; that stretch reads KMSSS.

It belongs to the class-I aminoacyl-tRNA synthetase family. Homodimer.

The protein resides in the cytoplasm. The enzyme catalyses tRNA(Tyr) + L-tyrosine + ATP = L-tyrosyl-tRNA(Tyr) + AMP + diphosphate + H(+). This Encephalitozoon cuniculi (strain GB-M1) (Microsporidian parasite) protein is Probable tyrosine--tRNA ligase, cytoplasmic.